Here is a 617-residue protein sequence, read N- to C-terminus: Estrogen receptor (617 aa).

A disordered region spans residues 1–54 (MSEEQARAEAPAGARQRRRSELEGYSVSLASLKLSPMYPEEEQRTTGGISSTAH). The modulating stretch occupies residues 1 to 186 (MSEEQARAEA…AIGLVKEIRY (186 aa)). NR C4-type zinc fingers lie at residues 187–207 (CSVCSDYASGYHYGVWSCEGC) and 223–247 (CPATNQCTIDRNRRKSCQACRLRKC). The nuclear receptor DNA-binding region spans 187-252 (CSVCSDYASG…RLRKCYEVGM (66 aa)). Residues 253 to 315 (MKGGFRKERG…GGGVADVVCM (63 aa)) form a hinge region. The segment at 269–303 (NRRPSGLKERERGYSKAQSGSDVREALPQDGQSSS) is disordered. Positions 316-552 (SPEQVLLLLL…DLLLEMLDAH (237 aa)) constitute an NR LBD domain. Residues 568–617 (VSSSPTTTATTPTTNTTTTTTTTTHHPSNGSTCPADLPSNPPGPGQSPSP) are disordered. Over residues 573-591 (TTTATTPTTNTTTTTTTTT) the composition is skewed to low complexity. A compositionally biased stretch (pro residues) spans 606-617 (SNPPGPGQSPSP).

The protein belongs to the nuclear hormone receptor family. NR3 subfamily. As to quaternary structure, binds DNA as a homodimer. Can form a heterodimer with ER-beta. As to expression, ovary and testis.

The protein localises to the nucleus. Functionally, the steroid hormones and their receptors are involved in the regulation of eukaryotic gene expression and affect cellular proliferation and differentiation in target tissues. The sequence is that of Estrogen receptor (esr1) from Ictalurus punctatus (Channel catfish).